The following is a 118-amino-acid chain: Cycloviolacin-O11 (118 aa).

A signal peptide spans 1–22; it reads MEMKNMVVGLFLIAAFALPALA. The propeptide occupies 23–84; it reads TSFEKDFITH…THSNSINALG (62 aa). A cross-link (cyclopeptide (Gly-Asn)) is located at residues 85–115; the sequence is GTLPCGESCVWIPCISAVVGCSCKSKVCYKN. 3 disulfides stabilise this stretch: Cys-89–Cys-105, Cys-93–Cys-107, and Cys-98–Cys-112. The propeptide occupies 116-118; the sequence is SLA.

Post-translationally, cycloviolacin-O11 is a cyclic peptide. In terms of tissue distribution, expressed in leaves, petals and petioles but not in roots and runners (at protein level).

Probably participates in a plant defense mechanism. This is Cycloviolacin-O11 (Voc2) from Viola odorata (Sweet violet).